We begin with the raw amino-acid sequence, 180 residues long: ATP-dependent protease subunit HslV (180 aa).

Threonine 9 is an active-site residue. Na(+) contacts are provided by alanine 164, cysteine 167, and threonine 170.

This sequence belongs to the peptidase T1B family. HslV subfamily. As to quaternary structure, a double ring-shaped homohexamer of HslV is capped on each side by a ring-shaped HslU homohexamer. The assembly of the HslU/HslV complex is dependent on binding of ATP.

It localises to the cytoplasm. The catalysed reaction is ATP-dependent cleavage of peptide bonds with broad specificity.. Allosterically activated by HslU binding. Functionally, protease subunit of a proteasome-like degradation complex believed to be a general protein degrading machinery. This Leptospira borgpetersenii serovar Hardjo-bovis (strain JB197) protein is ATP-dependent protease subunit HslV.